The primary structure comprises 400 residues: Enoyl-[acyl-carrier-protein] reductase [NADH] (400 aa).

NAD(+)-binding positions include 48 to 53, 74 to 75, 111 to 112, and 139 to 140; these read GASTGY, FE, DA, and LA. Tyrosine 225 serves as a coordination point for substrate. Residue tyrosine 235 is the Proton donor of the active site. NAD(+) is bound by residues lysine 244 and 273–275; that span reads VVT.

This sequence belongs to the TER reductase family. Monomer.

The catalysed reaction is a 2,3-saturated acyl-[ACP] + NAD(+) = a (2E)-enoyl-[ACP] + NADH + H(+). The protein operates within lipid metabolism; fatty acid biosynthesis. Functionally, involved in the final reduction of the elongation cycle of fatty acid synthesis (FAS II). Catalyzes the reduction of a carbon-carbon double bond in an enoyl moiety that is covalently linked to an acyl carrier protein (ACP). The polypeptide is Enoyl-[acyl-carrier-protein] reductase [NADH] (Burkholderia cenocepacia (strain ATCC BAA-245 / DSM 16553 / LMG 16656 / NCTC 13227 / J2315 / CF5610) (Burkholderia cepacia (strain J2315))).